A 361-amino-acid polypeptide reads, in one-letter code: Phospho-N-acetylmuramoyl-pentapeptide-transferase (361 aa).

10 helical membrane passes run 21–41 (YITL…FLVG), 73–93 (TMGG…WADL), 97–117 (FVWV…VDDW), 134–154 (YFWQ…TATV), 168–188 (LVLP…IVGT), 200–220 (GLAI…AYVA), 237–257 (AGEL…FLWF), 264–284 (VFMG…VAVI), 289–309 (IVLF…MLQV), and 338–358 (QVVV…LSTL).

Belongs to the glycosyltransferase 4 family. MraY subfamily. The cofactor is Mg(2+).

It is found in the cell inner membrane. It catalyses the reaction UDP-N-acetyl-alpha-D-muramoyl-L-alanyl-gamma-D-glutamyl-meso-2,6-diaminopimeloyl-D-alanyl-D-alanine + di-trans,octa-cis-undecaprenyl phosphate = di-trans,octa-cis-undecaprenyl diphospho-N-acetyl-alpha-D-muramoyl-L-alanyl-D-glutamyl-meso-2,6-diaminopimeloyl-D-alanyl-D-alanine + UMP. It participates in cell wall biogenesis; peptidoglycan biosynthesis. Its function is as follows. Catalyzes the initial step of the lipid cycle reactions in the biosynthesis of the cell wall peptidoglycan: transfers peptidoglycan precursor phospho-MurNAc-pentapeptide from UDP-MurNAc-pentapeptide onto the lipid carrier undecaprenyl phosphate, yielding undecaprenyl-pyrophosphoryl-MurNAc-pentapeptide, known as lipid I. The polypeptide is Phospho-N-acetylmuramoyl-pentapeptide-transferase (Methylobacillus flagellatus (strain ATCC 51484 / DSM 6875 / VKM B-1610 / KT)).